The chain runs to 302 residues: Ubiquinone biosynthesis protein COQ4, mitochondrial (302 aa).

The transit peptide at 1–19 (MNSSPARAVRALVQSQSRQ) directs the protein to the mitochondrion. Residues His-176, Asp-177, His-180, and Glu-192 each contribute to the Zn(2+) site. Basic and acidic residues predominate over residues 268–282 (PPPDMRDARKRERDA). The disordered stretch occupies residues 268–302 (PPPDMRDARKRERDARRRRKQLETEAQQGLDAASL).

The protein belongs to the COQ4 family. Component of a multi-subunit COQ enzyme complex, composed of at least COQ3, COQ4, COQ5, COQ6, COQ7 and COQ9. Zn(2+) serves as cofactor.

The protein localises to the mitochondrion inner membrane. It carries out the reaction a 4-hydroxy-3-methoxy-5-(all-trans-polyprenyl)benzoate + H(+) = a 2-methoxy-6-(all-trans-polyprenyl)phenol + CO2. It participates in cofactor biosynthesis; ubiquinone biosynthesis. Its function is as follows. Lyase that catalyzes the C1-decarboxylation of 4-hydroxy-3-methoxy-5-(all-trans-polyprenyl)benzoic acid into 2-methoxy-6-(all-trans-polyprenyl)phenol during ubiquinone biosynthesis. In Pyricularia oryzae (strain 70-15 / ATCC MYA-4617 / FGSC 8958) (Rice blast fungus), this protein is Ubiquinone biosynthesis protein COQ4, mitochondrial.